Consider the following 84-residue polypeptide: Defensin-like protein 116 (84 aa).

Residues 1 to 24 (MAITKNMLVVLLLTIIFVTSSVHC) form the signal peptide. 4 cysteine pairs are disulfide-bonded: C40–C80, C46–C71, C55–C78, and C59–C79.

It belongs to the DEFL family.

The protein resides in the secreted. The chain is Defensin-like protein 116 from Arabidopsis thaliana (Mouse-ear cress).